Reading from the N-terminus, the 459-residue chain is NADH-ubiquinone oxidoreductase chain 4 (459 aa).

13 helical membrane-spanning segments follow: residues 22–42 (HLSYTTLLFSFTIALLSLQWL), 61–81 (PISTPLLILTSWMTPLMILVS), 94–113 (RTFTTTIISLQISLTLAFSA), 114–134 (LEMMLFFTMFEATLIPTLIII), 146–166 (AGTYFLFYTLIGSLPLLIALT), 197–217 (WFALLMAFMIKMPLYGLHLWL), 225–245 (PIAGSMILAGVLLKLGGYGII), 258–278 (LSYPFMTLSLWGIIMTGLICL), 285–304 (SLIAYSSVGLMGLVISAALL), 308–330 (LSITGAIILMIAHGLSSSMLFCL), 352–372 (LLPLMTIWWLLASLMNMALPP), 380–400 (LTIIASLFSWANITIILTGLG), and 437–457 (LIMMLHMVPLILLMMKPQLMT).

It belongs to the complex I subunit 4 family.

It is found in the mitochondrion membrane. It carries out the reaction a ubiquinone + NADH + 5 H(+)(in) = a ubiquinol + NAD(+) + 4 H(+)(out). Core subunit of the mitochondrial membrane respiratory chain NADH dehydrogenase (Complex I) that is believed to belong to the minimal assembly required for catalysis. Complex I functions in the transfer of electrons from NADH to the respiratory chain. The immediate electron acceptor for the enzyme is believed to be ubiquinone. This chain is NADH-ubiquinone oxidoreductase chain 4 (MT-ND4), found in Pelomedusa subrufa (African side-necked turtle).